The primary structure comprises 138 residues: Diuretic hormone 1 (138 aa).

The signal sequence occupies residues 1-19 (MMWWAIWCVMVVVSSAASA). Positions 20–78 (APAPDSAPMDLVQIDSAGPDDESLGYAVSSLEGRYGAEAPWLYLLAEMPRDSQIGRAAV) are excised as a propeptide. Isoleucine amide is present on Ile121. Positions 125 to 138 (GLQWSRSEQPSAYY) are excised as a propeptide.

It belongs to the sauvagine/corticotropin-releasing factor/urotensin I family.

The protein localises to the secreted. Regulation of fluid secretion. This chain is Diuretic hormone 1, found in Manduca sexta (Tobacco hawkmoth).